The sequence spans 173 residues: Avenin-like a5 (173 aa).

Residues 1-19 form the signal peptide; it reads MKTMLILALIALAATSVVA.

This sequence belongs to the prolamin family. In terms of processing, contains 7 disulfide bonds.

Seed storage protein. Not integrated in the gluten polymer through disulfide bonds, unless incorporated by reduction and reoxidation during dough making. Increases dough strength and bread volume, but decreases dough stability when added into a base wheat flour. In Triticum aestivum (Wheat), this protein is Avenin-like a5.